The following is a 139-amino-acid chain: D-ribose pyranase (139 aa).

His20 acts as the Proton donor in catalysis. Substrate-binding positions include Asp28, His106, and 128–130; that span reads YAN.

The protein belongs to the RbsD / FucU family. RbsD subfamily. As to quaternary structure, homodecamer.

It localises to the cytoplasm. It catalyses the reaction beta-D-ribopyranose = beta-D-ribofuranose. The protein operates within carbohydrate metabolism; D-ribose degradation; D-ribose 5-phosphate from beta-D-ribopyranose: step 1/2. Its function is as follows. Catalyzes the interconversion of beta-pyran and beta-furan forms of D-ribose. The polypeptide is D-ribose pyranase (Escherichia coli O81 (strain ED1a)).